The sequence spans 357 residues: 3-isopropylmalate dehydrogenase (357 aa).

Substrate is bound by residues Arg-99, Arg-109, Arg-133, and Asp-223. Residues Asp-223, Asp-247, and Asp-251 each contribute to the Mg(2+) site. Gly-283 to Asp-295 serves as a coordination point for NAD(+).

It belongs to the isocitrate and isopropylmalate dehydrogenases family. LeuB type 2 subfamily. Homodimer. Requires Mg(2+) as cofactor. The cofactor is Mn(2+).

It localises to the cytoplasm. It catalyses the reaction (2R,3S)-3-isopropylmalate + NAD(+) = 4-methyl-2-oxopentanoate + CO2 + NADH. It functions in the pathway amino-acid biosynthesis; L-leucine biosynthesis; L-leucine from 3-methyl-2-oxobutanoate: step 3/4. Catalyzes the oxidation of 3-carboxy-2-hydroxy-4-methylpentanoate (3-isopropylmalate) to 3-carboxy-4-methyl-2-oxopentanoate. The product decarboxylates to 4-methyl-2 oxopentanoate. This chain is 3-isopropylmalate dehydrogenase, found in Leifsonia xyli subsp. xyli (strain CTCB07).